The chain runs to 100 residues: Urease subunit gamma (100 aa).

The protein belongs to the urease gamma subunit family. As to quaternary structure, heterotrimer of UreA (gamma), UreB (beta) and UreC (alpha) subunits. Three heterotrimers associate to form the active enzyme.

The protein localises to the cytoplasm. It catalyses the reaction urea + 2 H2O + H(+) = hydrogencarbonate + 2 NH4(+). The protein operates within nitrogen metabolism; urea degradation; CO(2) and NH(3) from urea (urease route): step 1/1. In Pseudomonas syringae pv. tomato (strain ATCC BAA-871 / DC3000), this protein is Urease subunit gamma.